The sequence spans 216 residues: Adenylate kinase (216 aa).

Position 10–15 (10–15 (GAGKGT)) interacts with ATP. The interval 30-59 (STGDIFRAAIKNQTPMGVEAKKFIDKGELV) is NMP. Residues Thr-31, Arg-36, 57 to 59 (ELV), 85 to 88 (GFPR), and Gln-92 contribute to the AMP site. The tract at residues 126-164 (GRFICRNCGTTYHRLYNPTKVEGTCDVCGGHDFYQRDDD) is LID. Arg-127 is a binding site for ATP. The Zn(2+) site is built by Cys-130 and Cys-133. 136-137 (TY) provides a ligand contact to ATP. Residues Cys-150 and Cys-153 each contribute to the Zn(2+) site. AMP is bound by residues Arg-161 and Arg-172. Gln-200 contacts ATP.

Belongs to the adenylate kinase family. As to quaternary structure, monomer.

The protein resides in the cytoplasm. It catalyses the reaction AMP + ATP = 2 ADP. It functions in the pathway purine metabolism; AMP biosynthesis via salvage pathway; AMP from ADP: step 1/1. In terms of biological role, catalyzes the reversible transfer of the terminal phosphate group between ATP and AMP. Plays an important role in cellular energy homeostasis and in adenine nucleotide metabolism. This chain is Adenylate kinase, found in Limosilactobacillus fermentum (strain NBRC 3956 / LMG 18251) (Lactobacillus fermentum).